A 3987-amino-acid chain; its full sequence is Hybrid PKS-NRPS synthetase buaA (3987 aa).

Residues 5–438 (NEPIAIVGSG…GANAHAIVES (434 aa)) form the Ketosynthase family 3 (KS3) domain. Catalysis depends on for beta-ketoacyl synthase activity residues Cys-176, His-315, and His-358. The segment at 546-872 (VFTGQGAQWP…RNADDVESFS (327 aa)) is malonyl-CoA:ACP transacylase (MAT) domain. Positions 939–1072 (HELLGVRVDS…GAVRLQLGAA (134 aa)) are N-terminal hotdog fold. In terms of domain architecture, PKS/mFAS DH spans 939–1240 (HELLGVRVDS…VAPLVPVTQS (302 aa)). The segment at 940 to 1238 (ELLGVRVDSL…LQVAPLVPVT (299 aa)) is dehydratase (DH) domain. The active-site Proton acceptor; for dehydratase activity is His-970. The C-terminal hotdog fold stretch occupies residues 1087-1240 (MNDVNIEHFY…VAPLVPVTQS (154 aa)). Asp-1147 functions as the Proton donor; for dehydratase activity in the catalytic mechanism. Residues 1399–1583 (YLANLVKQLS…TSTPSHDVFM (185 aa)) form a methyltransferase (MT) domain region. A ketoreductase (KR) domain region spans residues 2113 to 2285 (TYLLVGLTGE…LPGSVMNLAG (173 aa)). A Carrier 1 domain is found at 2397-2473 (RVLTNGLILT…AMVEDTMERM (77 aa)). Ser-2433 bears the O-(pantetheine 4'-phosphoryl)serine mark. The disordered stretch occupies residues 2489-2561 (AADRPSAPSD…PPPSSVMSED (73 aa)). The segment covering 2514-2525 (HNSEEQESHAME) has biased composition (basic and acidic residues). Residues 2532 to 2550 (STTSGGECSSTKESSSSEA) are compositionally biased toward low complexity. The segment at 2582-3001 (MGYGSLQFFF…QLVKMCAYME (420 aa)) is condensation (C) domain. The adenylation (A) (KR) domain stretch occupies residues 3042-3448 (LDVAQARPEA…GQLYYEGRIA (407 aa)). A Carrier 2 domain is found at 3564 to 3644 (ADLSETELAL…AMALKIRNSQ (81 aa)). Ser-3604 is modified (O-(pantetheine 4'-phosphoryl)serine). Residues 3680-3916 (TVVLTGATGY…TGIAAAAVGA (237 aa)) form a reductase (R) domain region.

In the C-terminal section; belongs to the NRP synthetase family.

Its pathway is mycotoxin biosynthesis. Its function is as follows. Hybrid PKS-NRPS synthetase; part of the gene cluster that mediates the biosynthesis of burnettramic acids, an unusual class of bolaamphiphilic pyrrolizidinediones that display potent antibacterial, antifungal, and cytotoxic activities. The first step of the biosynthesis of burnettramic acids is the hydroxylation of proline by the proline hydroxylase buaE to generate 4-hydroxyproline. The PKS-NRPS buaA and trans-enoyl reductase buaC construct the highly reduced polyketide chain, and the condensation (C) domain of buaA then catalyzes the amide bond formation with the activated 4-hydroxyproline. This is followed by the R domain releasing the nascent polyketide-peptide directly via a Dieckmann condensation to afford a tetramic acid fused to the hydroxyproline, generating the bicyclic pyrrolidinedione moiety. The cytochrome P450 monooxygenases buaD and buaG are likely responsible for the multiple hydroxylations on the polyketide chain and its terminus, although in a heterologous context, buaD does not appear to be required. Therefore, while buaG may be a multifunctional cytochrome P450 monooxygenase, it cannot be ruled out that the two secondary alcohols on the polyketide chain could have an acetate origin. Finally, the glycosyltransferase buaB transfers beta-D-mannose to the aglycone burnettramic acid A to form burnettramic acid A. Burnettramic acid B is a minor cis-pyrrolizidine epimer of burnettramic acid A and it is likely that small amounts of it form naturally in acidic environments. In Petromyces alliaceus (Aspergillus alliaceus), this protein is Hybrid PKS-NRPS synthetase buaA.